We begin with the raw amino-acid sequence, 176 residues long: Large ribosomal subunit protein bL19 (176 aa).

Belongs to the bacterial ribosomal protein bL19 family.

This protein is located at the 30S-50S ribosomal subunit interface and may play a role in the structure and function of the aminoacyl-tRNA binding site. In Sinorhizobium fredii (strain NBRC 101917 / NGR234), this protein is Large ribosomal subunit protein bL19.